We begin with the raw amino-acid sequence, 268 residues long: Phosphatidylglycerol--prolipoprotein diacylglyceryl transferase (268 aa).

Transmembrane regions (helical) follow at residues leucine 14–tryptophan 34, leucine 57–tyrosine 77, phenylalanine 90–phenylalanine 110, and isoleucine 117–glycine 137. Arginine 140 is an a 1,2-diacyl-sn-glycero-3-phospho-(1'-sn-glycerol) binding site. 3 consecutive transmembrane segments (helical) span residues glutamine 174–isoleucine 194, tyrosine 200–phenylalanine 220, and glycine 238–isoleucine 258.

This sequence belongs to the Lgt family.

The protein localises to the cell inner membrane. It carries out the reaction L-cysteinyl-[prolipoprotein] + a 1,2-diacyl-sn-glycero-3-phospho-(1'-sn-glycerol) = an S-1,2-diacyl-sn-glyceryl-L-cysteinyl-[prolipoprotein] + sn-glycerol 1-phosphate + H(+). It functions in the pathway protein modification; lipoprotein biosynthesis (diacylglyceryl transfer). Catalyzes the transfer of the diacylglyceryl group from phosphatidylglycerol to the sulfhydryl group of the N-terminal cysteine of a prolipoprotein, the first step in the formation of mature lipoproteins. This is Phosphatidylglycerol--prolipoprotein diacylglyceryl transferase from Francisella tularensis subsp. mediasiatica (strain FSC147).